A 302-amino-acid chain; its full sequence is Nucleotide-binding protein Rsph17029_0317 (302 aa).

Gly-15–Thr-22 is an ATP binding site. GTP is bound at residue Asp-62–Asn-65.

It belongs to the RapZ-like family.

Its function is as follows. Displays ATPase and GTPase activities. This Cereibacter sphaeroides (strain ATCC 17029 / ATH 2.4.9) (Rhodobacter sphaeroides) protein is Nucleotide-binding protein Rsph17029_0317.